A 754-amino-acid polypeptide reads, in one-letter code: Phosphoribosylformylglycinamidine synthase subunit PurL (754 aa).

H54 is an active-site residue. ATP contacts are provided by Y57 and K101. E103 provides a ligand contact to Mg(2+). Substrate is bound by residues 104 to 107 and R126; that span reads SHNH. Catalysis depends on H105, which acts as the Proton acceptor. D127 is a Mg(2+) binding site. A substrate-binding site is contributed by Q252. Residue D280 coordinates Mg(2+). 324-326 provides a ligand contact to substrate; that stretch reads ESQ. Positions 386–412 are disordered; it reads PVYQRPVSRPESQEALNADSSKGLPRP. The ATP site is built by N512 and G549. Position 550 (N550) interacts with Mg(2+). S552 is a substrate binding site.

It belongs to the FGAMS family. As to quaternary structure, monomer. Part of the FGAM synthase complex composed of 1 PurL, 1 PurQ and 2 PurS subunits.

The protein localises to the cytoplasm. It carries out the reaction N(2)-formyl-N(1)-(5-phospho-beta-D-ribosyl)glycinamide + L-glutamine + ATP + H2O = 2-formamido-N(1)-(5-O-phospho-beta-D-ribosyl)acetamidine + L-glutamate + ADP + phosphate + H(+). The protein operates within purine metabolism; IMP biosynthesis via de novo pathway; 5-amino-1-(5-phospho-D-ribosyl)imidazole from N(2)-formyl-N(1)-(5-phospho-D-ribosyl)glycinamide: step 1/2. Its function is as follows. Part of the phosphoribosylformylglycinamidine synthase complex involved in the purines biosynthetic pathway. Catalyzes the ATP-dependent conversion of formylglycinamide ribonucleotide (FGAR) and glutamine to yield formylglycinamidine ribonucleotide (FGAM) and glutamate. The FGAM synthase complex is composed of three subunits. PurQ produces an ammonia molecule by converting glutamine to glutamate. PurL transfers the ammonia molecule to FGAR to form FGAM in an ATP-dependent manner. PurS interacts with PurQ and PurL and is thought to assist in the transfer of the ammonia molecule from PurQ to PurL. In Mycobacterium leprae (strain Br4923), this protein is Phosphoribosylformylglycinamidine synthase subunit PurL.